Consider the following 438-residue polypeptide: Coenzyme A disulfide reductase (438 aa).

Position 8–33 (8–33 (GAVAGGATCASQIRRLDKESDIIIFE)) interacts with FAD. Substrate-binding residues include Thr-15, Gln-19, Arg-22, Ser-39, and Asn-42. Cys-43 (nucleophile) is an active-site residue. Residue Cys-43 is the Redox-active of the active site. Position 71 (Lys-71) interacts with substrate. 151–166 (VLVIGAGYVSLEVLEN) is an NADP(+) binding site. 267–277 (TNVPNIYAIGD) serves as a coordination point for FAD. Substrate is bound at residue His-299. Tyr-419 serves as a coordination point for FAD. A substrate-binding site is contributed by Lys-427.

The protein belongs to the class-III pyridine nucleotide-disulfide oxidoreductase family. As to quaternary structure, homodimer. Requires FAD as cofactor.

It carries out the reaction NADP(+) + 2 CoA = CoA-disulfide + NADPH + H(+). In terms of biological role, catalyzes specifically the NADPH-dependent reduction of coenzyme A disulfide. This is Coenzyme A disulfide reductase from Staphylococcus aureus (strain Mu3 / ATCC 700698).